Reading from the N-terminus, the 184-residue chain is Glutathione-regulated potassium-efflux system ancillary protein KefG (184 aa).

This sequence belongs to the NAD(P)H dehydrogenase (quinone) family. KefG subfamily. Interacts with KefB.

The protein localises to the cell inner membrane. It carries out the reaction a quinone + NADH + H(+) = a quinol + NAD(+). The enzyme catalyses a quinone + NADPH + H(+) = a quinol + NADP(+). Regulatory subunit of a potassium efflux system that confers protection against electrophiles. Required for full activity of KefB. The chain is Glutathione-regulated potassium-efflux system ancillary protein KefG from Yersinia enterocolitica serotype O:8 / biotype 1B (strain NCTC 13174 / 8081).